Reading from the N-terminus, the 188-residue chain is dCTP deaminase (188 aa).

DCTP is bound by residues 111–116 (KSTYAR), 135–137 (TLE), Gln156, Tyr170, and Gln180. Glu137 serves as the catalytic Proton donor/acceptor.

Belongs to the dCTP deaminase family. Homotrimer.

The enzyme catalyses dCTP + H2O + H(+) = dUTP + NH4(+). The protein operates within pyrimidine metabolism; dUMP biosynthesis; dUMP from dCTP (dUTP route): step 1/2. In terms of biological role, catalyzes the deamination of dCTP to dUTP. This Aromatoleum aromaticum (strain DSM 19018 / LMG 30748 / EbN1) (Azoarcus sp. (strain EbN1)) protein is dCTP deaminase.